Here is a 139-residue protein sequence, read N- to C-terminus: Centromere protein S (139 aa).

The tract at residues glutamate 99–alanine 139 is disordered. The span at lysine 110–glycine 120 shows a compositional bias: basic residues.

It belongs to the TAF9 family. CENP-S/MHF1 subfamily. Heterodimer with CENPX, sometimes called MHF; this interaction stabilizes both partners. MHF heterodimers can assemble to form tetrameric structures. MHF also coassemble with CENPT-CENPW heterodimers at centromeres to form the tetrameric CENP-T-W-S-X complex. Forms a discrete complex with FANCM and CENPX, called FANCM-MHF; this interaction, probably mediated by direct binding between CENPS and FANCM, leads to synergistic activation of double-stranded DNA binding and strongly stimulates FANCM-mediated DNA remodeling. Recruited by FANCM to the Fanconi anemia (FA) core complex, which consists of CENPS, CENPX, FANCA, FANCB, FANCC, FANCE, FANCF, FANCG, FANCL, FANCM, FAAP24 and FAAP100. The FA core complex associates with Bloom syndrome (BLM) complex, which consists of at least BLM, DNA topoisomerase 3-alpha (TOP3A), RMI1/BLAP75, RPA1/RPA70 and RPA2/RPA32. The super complex between FA and BLM is called BRAFT. Component of the CENPA-CAD complex, composed of CENPI, CENPK, CENPL, CENPO, CENPP, CENPQ, CENPR and CENPS. The CENPA-CAD complex is probably recruited on centromeres by the CENPA-NAC complex, at least composed of CENPA, CENPC, CENPH, CENPM, CENPN, CENPT and CENPU.

It localises to the nucleus. Its subcellular location is the chromosome. The protein localises to the centromere. It is found in the kinetochore. Its function is as follows. DNA-binding component of the Fanconi anemia (FA) core complex. Required for the normal activation of the FA pathway, leading to monoubiquitination of the FANCI-FANCD2 complex in response to DNA damage, cellular resistance to DNA cross-linking drugs, and prevention of chromosomal breakage. In complex with CENPX (MHF heterodimer), crucial cofactor for FANCM in both binding and ATP-dependent remodeling of DNA. Stabilizes FANCM. In complex with CENPX and FANCM (but not other FANC proteins), rapidly recruited to blocked forks and promotes gene conversion at blocked replication forks. In complex with CENPT, CENPW and CENPX (CENP-T-W-S-X heterotetramer), involved in the formation of a functional kinetochore outer plate, which is essential for kinetochore-microtubule attachment and faithful mitotic progression. As a component of MHF and CENP-T-W-S-X complexes, binds DNA and bends it to form a nucleosome-like structure. DNA-binding function is fulfilled in the presence of CENPX, with the following preference for DNA substates: Holliday junction &gt; double-stranded &gt; splay arm &gt; single-stranded. Does not bind DNA on its own. The chain is Centromere protein S (CENPS) from Gallus gallus (Chicken).